The sequence spans 452 residues: Multifunctional glycoside hydrolase (452 aa).

Substrate is bound by residues glutamine 17, histidine 118, and asparagine 162. Catalysis depends on glutamate 163, which acts as the Proton donor. Tyrosine 303 is a binding site for substrate. Residue glutamate 361 is the Nucleophile of the active site. Residues tryptophan 407 and 414–415 contribute to the substrate site; that span reads EW.

This sequence belongs to the glycosyl hydrolase 1 family. Monomer. Homotrimer.

The enzyme catalyses Hydrolysis of terminal, non-reducing beta-D-glucosyl residues with release of beta-D-glucose.. The catalysed reaction is Hydrolysis of terminal non-reducing beta-D-galactose residues in beta-D-galactosides.. It carries out the reaction Hydrolysis of (1-&gt;4)-beta-D-xylans, to remove successive D-xylose residues from the non-reducing termini.. It catalyses the reaction Hydrolysis of (1-&gt;4)-linkages in (1-&gt;4)-beta-D-glucans, to remove successive glucose units.. The enzyme catalyses Hydrolysis of (1-&gt;4)-beta-D-glucosidic linkages in cellulose and cellotetraose, releasing cellobiose from the non-reducing ends of the chains.. It functions in the pathway glycan metabolism; beta-D-glucan degradation. Its pathway is glycan metabolism; cellulose degradation. Slight activation by Mn(2+), Ni(2+) and K(+). Slight inhibition by Fe(3+), Zn(2+), Co(2+), Mg(2+), Cu(2+), Na(+) and NH4(+). Its function is as follows. Has high beta-D-glucosidase, exoglucanase, beta-D-xylosidase, beta-D-galactosidase, and transgalactosylation activities in vitro. Has a very broad substrate specificity with the highest activity with p-nitrophenyl beta-D-galactopyranoside (pNPGal) as substrate. Active with pNP-beta-D-glucopyranoside (pNPGlu), pNP-beta-D-cellobioside (pNPC), lactose, pNP-beta-D-xylopyranoside (pNPX) and cellobiose in the order of decreasing activity, respectively. Very low activity with soluble polysaccharides synanthrin and locust bean gum. Very low, but detectable activity with insoluble substrates such as cotton and filter paper. No activity with pNP-alpha-L-arabinofuranoside (pNPAr) or carboxymethylcellulose (CMC) as substrates. Synthesizes galactooligosaccharides (GalOS) from lactose. Hydrolyzes pretreated corn stover releasing both glucose and xylose. This multifunctional enzyme may provide C.owensensis the benefit of utilizing a wide variety of available carbon sources in its natural growing environment as the ability to convert a wide range of soluble oligosaccharides to monoses is required in order to assimilate them. This chain is Multifunctional glycoside hydrolase, found in Caldicellulosiruptor owensensis (strain ATCC 700167 / DSM 13100 / OL).